Reading from the N-terminus, the 857-residue chain is Cadherin-related family member 1a (857 aa).

The signal sequence occupies residues 1–25 (MKNAREIQFSSFLLLAHFCFVGAQS). Residues 26–709 (DYAPYFYDNG…RENPMHFLGL (684 aa)) are Extracellular-facing. Cadherin domains are found at residues 40–139 (NGNM…RPQF), 140–252 (QNMP…PPIF), 253–359 (IGTP…PPTF), 365–478 (PQNV…APKF), 479–582 (TSDF…PPAF), and 574–693 (DLND…GPLT). Residues 710–730 (ISGVILILVFVTVIISTVIFV) traverse the membrane as a helical segment. At 731–857 (RRNKANRILP…LEQKNMANRY (127 aa)) the chain is on the cytoplasmic side. The disordered stretch occupies residues 746-765 (RKKRKPQKQDDFQEPFREEQ). The segment covering 752–765 (QKQDDFQEPFREEQ) has biased composition (basic and acidic residues).

Expressed in photoreceptor cells of the outer nuclear layer of the retina and in the pinal gland.

The protein localises to the membrane. In terms of biological role, potential calcium-dependent cell-adhesion protein. Plays a role in the organization of retinal cell layers and Muller glia morphology. The polypeptide is Cadherin-related family member 1a (Danio rerio (Zebrafish)).